Here is a 605-residue protein sequence, read N- to C-terminus: Protein ZRG17 (605 aa).

Residues 1–225 (METPQMNAIQ…DLLSNLPWPK (225 aa)) are Cytoplasmic-facing. Phosphoserine is present on residues serine 16 and serine 131. The segment at 118–178 (PAPKLVPPPP…PSSAASRTSF (61 aa)) is disordered. Over residues 143 to 176 (SKRSSMTLDSPFNFTTSTLQPHQQTPPSSAASRT) the composition is skewed to polar residues. A helical membrane pass occupies residues 226-246 (AYIQLSIAALQIFACLITFQV). Residues 247–254 (GHLYSWSN) lie on the Lumenal side of the membrane. The helical transmembrane segment at 255-275 (FITLSHFITYDIIGSLVIIFV) threads the bilayer. Residues 276–287 (ENLSQFQVWFTG) are Cytoplasmic-facing. Residues 288 to 308 (TITFPFGLNRIDVLLSFALAV) traverse the membrane as a helical segment. Position 309 (serine 309) is a topological domain, lumenal. The helical transmembrane segment at 310-330 (LCFVGLDLLFHIIEEFIVLFV) threads the bilayer. The Cytoplasmic segment spans residues 331 to 363 (ESGSSLTNNHDHDEINEQIPHSHIANANDSQNE). A helical membrane pass occupies residues 364–384 (NITLWYSILMINLVLSTLSLY). The Lumenal portion of the chain corresponds to 385-399 (KTFYANKYSNLKTKN). A helical transmembrane segment spans residues 400-420 (PIITITYTAYLFIYPLLLDLL). The Cytoplasmic segment spans residues 421–422 (SS). A helical membrane pass occupies residues 423 to 443 (ISDYLATLVISSLILWHGLTI). Over 444 to 545 (ARWTSTVLLM…ERLSEFKSRY (102 aa)) the chain is Lumenal. Residues 473-482 (DTTAHTQQVE) are compositionally biased toward polar residues. The interval 473–497 (DTTAHTQQVESKAAKEKPSVRPRSM) is disordered. Serine 498 is subject to Phosphoserine. The chain crosses the membrane as a helical span at residues 546-566 (ILNYDDIVISKVNFTLYVVLI). Residues 567–605 (KITMKGGSDDDELMLRLAIDKCIQTSIPTCETTIDIDRI) lie on the Cytoplasmic side of the membrane.

Its subcellular location is the endoplasmic reticulum membrane. The chain is Protein ZRG17 (ZRG17) from Saccharomyces cerevisiae (strain ATCC 204508 / S288c) (Baker's yeast).